Reading from the N-terminus, the 735-residue chain is Photosystem I P700 chlorophyll a apoprotein A2 (735 aa).

8 helical membrane-spanning segments follow: residues 46–69, 135–158, 175–199, 274–292, 331–354, 370–396, 418–440, and 518–536; these read IFAS…FHVA, LYTG…LHLQ, LNHH…HVAI, IAHH…GHMY, IHFQ…QHMY, AALY…IFFI, AIIS…PYVH, and FLVH…LILV. 2 residues coordinate [4Fe-4S] cluster: C560 and C569. 2 helical membrane-spanning segments follow: residues 576–597 and 644–666; these read AFYL…YWHW and LSVW…MFLI. Positions 655, 663, and 671 each coordinate chlorophyll a. W672 is a binding site for phylloquinone. A helical membrane pass occupies residues 708 to 728; sequence LVGLAHFSVGYIFTYAAFLIA.

This sequence belongs to the PsaA/PsaB family. In terms of assembly, the PsaA/B heterodimer binds the P700 chlorophyll special pair and subsequent electron acceptors. PSI consists of a core antenna complex that captures photons, and an electron transfer chain that converts photonic excitation into a charge separation. The eukaryotic PSI reaction center is composed of at least 11 subunits. It depends on P700 is a chlorophyll a/chlorophyll a' dimer, A0 is one or more chlorophyll a, A1 is one or both phylloquinones and FX is a shared 4Fe-4S iron-sulfur center. as a cofactor.

The protein localises to the plastid. Its subcellular location is the chloroplast thylakoid membrane. It carries out the reaction reduced [plastocyanin] + hnu + oxidized [2Fe-2S]-[ferredoxin] = oxidized [plastocyanin] + reduced [2Fe-2S]-[ferredoxin]. Functionally, psaA and PsaB bind P700, the primary electron donor of photosystem I (PSI), as well as the electron acceptors A0, A1 and FX. PSI is a plastocyanin-ferredoxin oxidoreductase, converting photonic excitation into a charge separation, which transfers an electron from the donor P700 chlorophyll pair to the spectroscopically characterized acceptors A0, A1, FX, FA and FB in turn. Oxidized P700 is reduced on the lumenal side of the thylakoid membrane by plastocyanin. The polypeptide is Photosystem I P700 chlorophyll a apoprotein A2 (Zea mays (Maize)).